The chain runs to 107 residues: Pathogenesis-related protein PR-4 (107 aa).

Residues 1 to 107 (QNINWDLRTA…VNYDFVDCGD (107 aa)) form the Barwin domain. Cystine bridges form between cysteine 14-cysteine 46, cysteine 35-cysteine 69, and cysteine 49-cysteine 105.

Preferentially expressed in the tissue surrounding the abscission zone of fruitlets.

The protein resides in the secreted. The protein localises to the cell wall. May be involved in protecting plant tissues from pathogen infection. This Prunus persica (Peach) protein is Pathogenesis-related protein PR-4.